The primary structure comprises 439 residues: Adenylosuccinate synthetase (439 aa).

Residues 25–31 (GDEGKGK), 53–55 (GHT), and Lys-62 each bind GTP. Asp-26 serves as the catalytic Proton acceptor. Positions 26 and 53 each coordinate Mg(2+). IMP-binding positions include 26–29 (DEGK) and 51–54 (NAGH). His-54 acts as the Proton donor in catalysis. IMP-binding residues include Thr-141, Arg-155, Asn-232, and Thr-247. Position 307 (Thr-307) interacts with GTP. A substrate-binding site is contributed by 307-313 (TTTNRPR). Arg-311 contributes to the IMP binding site. GTP contacts are provided by residues Arg-313, 339–341 (KLD), and 425–427 (GVG).

Belongs to the adenylosuccinate synthetase family. As to quaternary structure, homodimer. Mg(2+) serves as cofactor.

It localises to the cytoplasm. The enzyme catalyses IMP + L-aspartate + GTP = N(6)-(1,2-dicarboxyethyl)-AMP + GDP + phosphate + 2 H(+). The protein operates within purine metabolism; AMP biosynthesis via de novo pathway; AMP from IMP: step 1/2. Plays an important role in the salvage pathway for purine nucleotide biosynthesis. Catalyzes the first commited step in the biosynthesis of AMP from IMP. The sequence is that of Adenylosuccinate synthetase from Plasmodium chabaudi chabaudi.